The chain runs to 654 residues: Acetyl-coenzyme A synthetase (654 aa).

Residues 190–193 (RGGK) and T313 each bind CoA. ATP is bound by residues 389–391 (GEP), 413–418 (DTWWQT), D504, and R519. Position 527 (S527) interacts with CoA. R530 contributes to the ATP binding site. Positions 541, 543, and 546 each coordinate Mg(2+). K613 is modified (N6-acetyllysine).

This sequence belongs to the ATP-dependent AMP-binding enzyme family. Mg(2+) serves as cofactor. Post-translationally, acetylated. Deacetylation by the SIR2-homolog deacetylase activates the enzyme.

It carries out the reaction acetate + ATP + CoA = acetyl-CoA + AMP + diphosphate. Catalyzes the conversion of acetate into acetyl-CoA (AcCoA), an essential intermediate at the junction of anabolic and catabolic pathways. AcsA undergoes a two-step reaction. In the first half reaction, AcsA combines acetate with ATP to form acetyl-adenylate (AcAMP) intermediate. In the second half reaction, it can then transfer the acetyl group from AcAMP to the sulfhydryl group of CoA, forming the product AcCoA. The polypeptide is Acetyl-coenzyme A synthetase (Leptospira biflexa serovar Patoc (strain Patoc 1 / Ames)).